The chain runs to 623 residues: Bifunctional dihydrofolate reductase-thymidylate synthase (623 aa).

In terms of domain architecture, DHFR spans 9-237; sequence DIYAICACCK…TTLDFLVYSK (229 aa). A substrate-binding site is contributed by 13–14; sequence IC. NADP(+) contacts are provided by residues Ala15 and 38–44; that span reads GLGNKGT. Asp53 is a binding site for substrate. 3 consecutive repeat copies span residues 88 to 91, 94 to 97, and 100 to 103. Positions 88 to 103 are 3 X 4 AA repeats of G-G-D-N; it reads GGDNTSGGDNTHGGDN. NADP(+) is bound by residues 115 to 117, 137 to 139, and Asp153; these read RSS and SKT. Residues Ile173, Tyr179, and Thr194 each contribute to the substrate site. 174–181 is an NADP(+) binding site; it reads GGAQVYRE. The disordered stretch occupies residues 263 to 309; sequence TAMRRNVAPRTAAPPMGPHSRANGERAPPRARARRTTPRQRKTTSCT. A compositionally biased stretch (basic residues) spans 291-304; it reads PRARARRTTPRQRK. The tract at residues 337–623 is thymidylate synthase; that stretch reads QHPEYQYLGI…HDKITMEMAA (287 aa). Arg360 contacts dUMP. Cys505 is an active-site residue. Residues His506, 524–528, Asn536, and 566–568 each bind dUMP; these read QRSCD and HVY.

In the N-terminal section; belongs to the dihydrofolate reductase family. This sequence in the C-terminal section; belongs to the thymidylate synthase family. As to quaternary structure, homodimer.

The enzyme catalyses (6S)-5,6,7,8-tetrahydrofolate + NADP(+) = 7,8-dihydrofolate + NADPH + H(+). It carries out the reaction dUMP + (6R)-5,10-methylene-5,6,7,8-tetrahydrofolate = 7,8-dihydrofolate + dTMP. The protein operates within cofactor biosynthesis; tetrahydrofolate biosynthesis; 5,6,7,8-tetrahydrofolate from 7,8-dihydrofolate: step 1/1. Its function is as follows. Bifunctional enzyme. Involved in de novo dTMP biosynthesis. Key enzyme in folate metabolism. Catalyzes an essential reaction for de novo glycine and purine synthesis, DNA precursor synthesis, and for the conversion of dUMP to dTMP. The chain is Bifunctional dihydrofolate reductase-thymidylate synthase from Plasmodium vivax.